The primary structure comprises 365 residues: Putative F-box/kelch-repeat protein At3g16880 (365 aa).

The region spanning 1-47 (MTKMSKLPNDLLEEILSRSPLYSMRAIRLTCKKWNTLAKEESFTKKQ) is the F-box domain. Kelch repeat units lie at residues 98–149 (RVYH…TKKS) and 155–205 (ILSS…VKGN).

The chain is Putative F-box/kelch-repeat protein At3g16880 from Arabidopsis thaliana (Mouse-ear cress).